Consider the following 564-residue polypeptide: Proline--tRNA ligase (564 aa).

It belongs to the class-II aminoacyl-tRNA synthetase family. ProS type 1 subfamily. Homodimer.

Its subcellular location is the cytoplasm. The enzyme catalyses tRNA(Pro) + L-proline + ATP = L-prolyl-tRNA(Pro) + AMP + diphosphate. Catalyzes the attachment of proline to tRNA(Pro) in a two-step reaction: proline is first activated by ATP to form Pro-AMP and then transferred to the acceptor end of tRNA(Pro). As ProRS can inadvertently accommodate and process non-cognate amino acids such as alanine and cysteine, to avoid such errors it has two additional distinct editing activities against alanine. One activity is designated as 'pretransfer' editing and involves the tRNA(Pro)-independent hydrolysis of activated Ala-AMP. The other activity is designated 'posttransfer' editing and involves deacylation of mischarged Ala-tRNA(Pro). The misacylated Cys-tRNA(Pro) is not edited by ProRS. This chain is Proline--tRNA ligase, found in Coxiella burnetii (strain RSA 331 / Henzerling II).